Reading from the N-terminus, the 296-residue chain is 4-hydroxybenzoate octaprenyltransferase (296 aa).

8 helical membrane-spanning segments follow: residues proline 28 to glycine 48, leucine 52 to isoleucine 72, alanine 102 to serine 122, threonine 145 to alanine 167, serine 174 to valine 196, asparagine 219 to phenylalanine 239, leucine 241 to tryptophan 261, and phenylalanine 275 to phenylalanine 295.

This sequence belongs to the UbiA prenyltransferase family. The cofactor is Mg(2+).

It is found in the cell inner membrane. It catalyses the reaction all-trans-octaprenyl diphosphate + 4-hydroxybenzoate = 4-hydroxy-3-(all-trans-octaprenyl)benzoate + diphosphate. It participates in cofactor biosynthesis; ubiquinone biosynthesis. Its function is as follows. Catalyzes the prenylation of para-hydroxybenzoate (PHB) with an all-trans polyprenyl group. Mediates the second step in the final reaction sequence of ubiquinone-8 (UQ-8) biosynthesis, which is the condensation of the polyisoprenoid side chain with PHB, generating the first membrane-bound Q intermediate 3-octaprenyl-4-hydroxybenzoate. The polypeptide is 4-hydroxybenzoate octaprenyltransferase (Pseudomonas putida (strain GB-1)).